Here is a 931-residue protein sequence, read N- to C-terminus: Isoleucine--tRNA ligase (931 aa).

The 'HIGH' region motif lies at 58–68 (PYANGHLHCGH). Position 559 (E559) interacts with L-isoleucyl-5'-AMP. The 'KMSKS' region motif lies at 600-604 (KLSKS). An ATP-binding site is contributed by K603. 4 residues coordinate Zn(2+): C894, C897, C914, and C917.

Belongs to the class-I aminoacyl-tRNA synthetase family. IleS type 1 subfamily. Monomer. Zn(2+) serves as cofactor.

Its subcellular location is the cytoplasm. It catalyses the reaction tRNA(Ile) + L-isoleucine + ATP = L-isoleucyl-tRNA(Ile) + AMP + diphosphate. In terms of biological role, catalyzes the attachment of isoleucine to tRNA(Ile). As IleRS can inadvertently accommodate and process structurally similar amino acids such as valine, to avoid such errors it has two additional distinct tRNA(Ile)-dependent editing activities. One activity is designated as 'pretransfer' editing and involves the hydrolysis of activated Val-AMP. The other activity is designated 'posttransfer' editing and involves deacylation of mischarged Val-tRNA(Ile). The polypeptide is Isoleucine--tRNA ligase (Legionella pneumophila (strain Lens)).